Here is a 749-residue protein sequence, read N- to C-terminus: 5-methyltetrahydropteroyltriglutamate--homocysteine methyltransferase (749 aa).

5-methyltetrahydropteroyltri-L-glutamate is bound by residues 15 to 18 and K114; that span reads RELK. Residues 425–427 and E478 each bind L-homocysteine; that span reads IGS. L-methionine-binding positions include 425–427 and E478; that span reads IGS. 5-methyltetrahydropteroyltri-L-glutamate is bound at residue W555. D593 is an L-homocysteine binding site. An L-methionine-binding site is contributed by D593. E599 contributes to the 5-methyltetrahydropteroyltri-L-glutamate binding site. Zn(2+) contacts are provided by H636, C638, and E660. H689 (proton donor) is an active-site residue. C721 contributes to the Zn(2+) binding site.

This sequence belongs to the vitamin-B12 independent methionine synthase family. Requires Zn(2+) as cofactor.

The enzyme catalyses 5-methyltetrahydropteroyltri-L-glutamate + L-homocysteine = tetrahydropteroyltri-L-glutamate + L-methionine. The protein operates within amino-acid biosynthesis; L-methionine biosynthesis via de novo pathway; L-methionine from L-homocysteine (MetE route): step 1/1. Functionally, catalyzes the transfer of a methyl group from 5-methyltetrahydrofolate to homocysteine resulting in methionine formation. The chain is 5-methyltetrahydropteroyltriglutamate--homocysteine methyltransferase from Streptococcus pneumoniae serotype 4 (strain ATCC BAA-334 / TIGR4).